Here is a 143-residue protein sequence, read N- to C-terminus: MKVEIYTDGACKGNPGPGGWGVLLRYNGREKTLHGGEPQTTNNRMELMAAIKGLEALKRPCEVDLYTDSQYLQQGMKEWIKTWKRNGWRNSKKELVKNAELWKSLDNLASIHNINWHWVKGHSGHLENDLVDALANLGIEELS.

The region spanning 1-140 (MKVEIYTDGA…VDALANLGIE (140 aa)) is the RNase H type-1 domain. Asp8, Glu46, Asp68, and Asp132 together coordinate Mg(2+).

Belongs to the RNase H family. In terms of assembly, monomer. Requires Mg(2+) as cofactor.

It localises to the cytoplasm. It carries out the reaction Endonucleolytic cleavage to 5'-phosphomonoester.. In terms of biological role, endonuclease that specifically degrades the RNA of RNA-DNA hybrids. The chain is Ribonuclease H from Legionella pneumophila (strain Lens).